We begin with the raw amino-acid sequence, 337 residues long: N-acetyl-gamma-glutamyl-phosphate reductase (337 aa).

Residue Cys-145 is part of the active site.

It belongs to the NAGSA dehydrogenase family. Type 1 subfamily.

Its subcellular location is the cytoplasm. The catalysed reaction is N-acetyl-L-glutamate 5-semialdehyde + phosphate + NADP(+) = N-acetyl-L-glutamyl 5-phosphate + NADPH + H(+). It participates in amino-acid biosynthesis; L-arginine biosynthesis; N(2)-acetyl-L-ornithine from L-glutamate: step 3/4. In terms of biological role, catalyzes the NADPH-dependent reduction of N-acetyl-5-glutamyl phosphate to yield N-acetyl-L-glutamate 5-semialdehyde. The protein is N-acetyl-gamma-glutamyl-phosphate reductase of Methanosarcina barkeri (strain Fusaro / DSM 804).